Consider the following 103-residue polypeptide: MLTKITFFERFEQDILSGAKTITLRDEAESHVFAGQILPVSTFEDDRWFCDIEVIEVVPVLFSELTEQHAAQENMTLPELRRVIQEIYPGLEQLFQIRFCLVQ.

An ASCH domain is found at 6-92 (TFFERFEQDI…VIQEIYPGLE (87 aa)). Lys-20 acts as the Proton acceptor in catalysis. The active-site Nucleophile is the Thr-23. Glu-73 (proton donor) is an active-site residue.

Belongs to the N(4)-acetylcytidine amidohydrolase family.

The enzyme catalyses N(4)-acetylcytidine + H2O = cytidine + acetate + H(+). It carries out the reaction N(4)-acetyl-2'-deoxycytidine + H2O = 2'-deoxycytidine + acetate + H(+). The catalysed reaction is N(4)-acetylcytosine + H2O = cytosine + acetate + H(+). Its function is as follows. Catalyzes the hydrolysis of N(4)-acetylcytidine (ac4C). In Shewanella sp. (strain MR-4), this protein is N(4)-acetylcytidine amidohydrolase.